Reading from the N-terminus, the 273-residue chain is 4-hydroxy-tetrahydrodipicolinate reductase (273 aa).

NAD(+)-binding positions include 12-17 (GAGGRM) and Glu-38. Arg-39 serves as a coordination point for NADP(+). NAD(+) is bound by residues 102–104 (GTT) and 126–129 (AANF). His-159 acts as the Proton donor/acceptor in catalysis. A (S)-2,3,4,5-tetrahydrodipicolinate-binding site is contributed by His-160. Lys-163 functions as the Proton donor in the catalytic mechanism. 169-170 (GT) is a (S)-2,3,4,5-tetrahydrodipicolinate binding site.

It belongs to the DapB family. In terms of assembly, homotetramer.

The protein localises to the cytoplasm. The enzyme catalyses (S)-2,3,4,5-tetrahydrodipicolinate + NAD(+) + H2O = (2S,4S)-4-hydroxy-2,3,4,5-tetrahydrodipicolinate + NADH + H(+). It catalyses the reaction (S)-2,3,4,5-tetrahydrodipicolinate + NADP(+) + H2O = (2S,4S)-4-hydroxy-2,3,4,5-tetrahydrodipicolinate + NADPH + H(+). It functions in the pathway amino-acid biosynthesis; L-lysine biosynthesis via DAP pathway; (S)-tetrahydrodipicolinate from L-aspartate: step 4/4. Functionally, catalyzes the conversion of 4-hydroxy-tetrahydrodipicolinate (HTPA) to tetrahydrodipicolinate. In Salmonella typhimurium (strain LT2 / SGSC1412 / ATCC 700720), this protein is 4-hydroxy-tetrahydrodipicolinate reductase.